A 231-amino-acid polypeptide reads, in one-letter code: Transmembrane protein 225 (231 aa).

The Cytoplasmic portion of the chain corresponds to 1–13; the sequence is MVHILVRKVEATN. The helical transmembrane segment at 14 to 34 threads the bilayer; the sequence is MFFSSWTLVFLAVGIIIEEWA. Residues 35–67 are Extracellular-facing; sequence ELKLGPQKPTITHSPWICCTPLWPSDGLEVIRN. The chain crosses the membrane as a helical span at residues 68 to 88; it reads ILIVVLSLSFMHNLLLGFEFT. Topologically, residues 89 to 97 are cytoplasmic; it reads YMIPQTKYT. A helical membrane pass occupies residues 98–118; it reads LIMTACLAFLTGILLLGALLL. Topologically, residues 119–135 are extracellular; that stretch reads YHHMLRQGESVYYSSYK. A helical membrane pass occupies residues 136–156; it reads ISWIIFTAYLNVLFLFISGFL. The Cytoplasmic portion of the chain corresponds to 157–231; that stretch reads SLLQYKQPID…IQARRVTWAL (75 aa). Residues 225-229 carry the RVxF motif; the sequence is RRVTW.

Interacts (via RVxF motif) with PPP1CC.

The protein localises to the cytoplasmic vesicle. It is found in the secretory vesicle. It localises to the acrosome membrane. Its function is as follows. Probably inhibits protein phosphatase 1 (PP1) in sperm via binding to catalytic subunit PPP1CC. The chain is Transmembrane protein 225 (TMEM225) from Bos taurus (Bovine).